Here is a 913-residue protein sequence, read N- to C-terminus: Anoctamin-5 (913 aa).

The Cytoplasmic portion of the chain corresponds to M1 to K299. The chain crosses the membrane as a helical span at residues I300–V320. Over G321–N380 the chain is Extracellular. 3 N-linked (GlcNAc...) asparagine glycosylation sites follow: N335, N366, and N380. Residues E381 to W401 form a helical membrane-spanning segment. Topologically, residues K402–S462 are cytoplasmic. The chain crosses the membrane as a helical span at residues G463–Y483. Residues R484–Q511 are Extracellular-facing. A helical transmembrane segment spans residues I512–F532. Residues Y533–T557 lie on the Cytoplasmic side of the membrane. Residues L558–F578 form a helical membrane-spanning segment. The Extracellular portion of the chain corresponds to K579–Q679. The chain crosses the membrane as a helical span at residues F680 to N700. Topologically, residues N701 to D732 are cytoplasmic. Residues I733–S753 form a helical membrane-spanning segment. The Extracellular portion of the chain corresponds to D754–T834. N-linked (GlcNAc...) asparagine glycosylation is found at N768, N778, and N791. The chain crosses the membrane as a helical span at residues F835 to P855. Over D856–L913 the chain is Cytoplasmic.

This sequence belongs to the anoctamin family. In terms of tissue distribution, highly expressed in brain, heart, kidney, lung, and skeletal muscle. Weakly expressed in bone marrow, fetal liver, placenta, spleen, thymus, osteoblasts and periodontal ligament cells.

Its subcellular location is the endoplasmic reticulum membrane. It localises to the cell membrane. In terms of biological role, plays a role in plasma membrane repair in a process involving annexins. Does not exhibit calcium-activated chloride channel (CaCC) activity. In Homo sapiens (Human), this protein is Anoctamin-5 (ANO5).